The primary structure comprises 152 residues: Xanthine-guanine phosphoribosyltransferase (152 aa).

5-phospho-alpha-D-ribose 1-diphosphate-binding positions include 37–38, Arg69, and 88–96; these read RG and DDLVDTGGT. Arg69 contacts GMP. Position 89 (Asp89) interacts with Mg(2+). Positions 92 and 135 each coordinate guanine. Xanthine-binding residues include Asp92 and Ile135. GMP contacts are provided by residues 92–96 and 134–135; these read DTGGT and WI.

It belongs to the purine/pyrimidine phosphoribosyltransferase family. XGPT subfamily. Homotetramer. Mg(2+) is required as a cofactor.

The protein localises to the cell inner membrane. It catalyses the reaction GMP + diphosphate = guanine + 5-phospho-alpha-D-ribose 1-diphosphate. The catalysed reaction is XMP + diphosphate = xanthine + 5-phospho-alpha-D-ribose 1-diphosphate. The enzyme catalyses IMP + diphosphate = hypoxanthine + 5-phospho-alpha-D-ribose 1-diphosphate. It participates in purine metabolism; GMP biosynthesis via salvage pathway; GMP from guanine: step 1/1. It functions in the pathway purine metabolism; XMP biosynthesis via salvage pathway; XMP from xanthine: step 1/1. In terms of biological role, purine salvage pathway enzyme that catalyzes the transfer of the ribosyl-5-phosphate group from 5-phospho-alpha-D-ribose 1-diphosphate (PRPP) to the N9 position of the 6-oxopurines guanine and xanthine to form the corresponding ribonucleotides GMP (guanosine 5'-monophosphate) and XMP (xanthosine 5'-monophosphate), with the release of PPi. To a lesser extent, also acts on hypoxanthine. The chain is Xanthine-guanine phosphoribosyltransferase from Escherichia coli (strain UTI89 / UPEC).